The primary structure comprises 162 residues: Ribosome maturation factor RimP (162 aa).

Belongs to the RimP family.

It is found in the cytoplasm. Its function is as follows. Required for maturation of 30S ribosomal subunits. This Ralstonia pickettii (strain 12J) protein is Ribosome maturation factor RimP.